Reading from the N-terminus, the 346-residue chain is Phosphate acyltransferase (346 aa).

This sequence belongs to the PlsX family. Homodimer. Probably interacts with PlsY.

The protein localises to the cytoplasm. It catalyses the reaction a fatty acyl-[ACP] + phosphate = an acyl phosphate + holo-[ACP]. It participates in lipid metabolism; phospholipid metabolism. Catalyzes the reversible formation of acyl-phosphate (acyl-PO(4)) from acyl-[acyl-carrier-protein] (acyl-ACP). This enzyme utilizes acyl-ACP as fatty acyl donor, but not acyl-CoA. This Geobacter sulfurreducens (strain ATCC 51573 / DSM 12127 / PCA) protein is Phosphate acyltransferase.